We begin with the raw amino-acid sequence, 163 residues long: Nucleotide-binding protein EAT1b_2037 (163 aa).

It belongs to the YajQ family.

Functionally, nucleotide-binding protein. This is Nucleotide-binding protein EAT1b_2037 from Exiguobacterium sp. (strain ATCC BAA-1283 / AT1b).